A 178-amino-acid polypeptide reads, in one-letter code: Large ribosomal subunit protein uL6 (178 aa).

It belongs to the universal ribosomal protein uL6 family. Part of the 50S ribosomal subunit.

This protein binds to the 23S rRNA, and is important in its secondary structure. It is located near the subunit interface in the base of the L7/L12 stalk, and near the tRNA binding site of the peptidyltransferase center. The chain is Large ribosomal subunit protein uL6 from Helicobacter pylori (strain HPAG1).